The chain runs to 377 residues: 2-iminoacetate synthase (377 aa).

One can recognise a Radical SAM core domain in the interval 71-301; it reads NTVSFYVPLY…PEIELSLSTR (231 aa). [4Fe-4S] cluster is bound by residues Cys85, Cys89, and Cys92.

The protein belongs to the radical SAM superfamily. ThiH family. In terms of assembly, forms a heterodimer with ThiG. Requires [4Fe-4S] cluster as cofactor.

The catalysed reaction is L-tyrosine + S-adenosyl-L-methionine + NADPH = 2-iminoacetate + 4-methylphenol + 5'-deoxyadenosine + L-methionine + NADP(+). Its pathway is cofactor biosynthesis; thiamine diphosphate biosynthesis. Its function is as follows. Catalyzes the radical-mediated cleavage of tyrosine to 2-iminoacetate and 4-cresol. This is 2-iminoacetate synthase (thiH) from Escherichia coli (strain K12).